A 216-amino-acid chain; its full sequence is Guanylate kinase (216 aa).

The region spanning 15–193 (GNLFMVVAPS…ALKQLQNVVH (179 aa)) is the Guanylate kinase-like domain. 22-29 (APSGAGKS) contacts ATP.

Belongs to the guanylate kinase family.

The protein localises to the cytoplasm. The enzyme catalyses GMP + ATP = GDP + ADP. Essential for recycling GMP and indirectly, cGMP. In Cupriavidus metallidurans (strain ATCC 43123 / DSM 2839 / NBRC 102507 / CH34) (Ralstonia metallidurans), this protein is Guanylate kinase.